We begin with the raw amino-acid sequence, 176 residues long: Putative L,D-transpeptidase YqjB (176 aa).

Positions 1–25 are cleaved as a signal peptide; that stretch reads MRFFLCSIFMMISPIWPLGENPLPG. Residues 27-151 form the L,D-TPase catalytic domain; sequence PYVIVNKRTN…IPVGTRVLIT (125 aa). The Proton donor/acceptor role is filled by histidine 111. Cysteine 127 acts as the Nucleophile in catalysis.

This sequence belongs to the YkuD family.

It functions in the pathway cell wall biogenesis; peptidoglycan biosynthesis. The chain is Putative L,D-transpeptidase YqjB (yqjB) from Bacillus subtilis (strain 168).